Reading from the N-terminus, the 243-residue chain is Asnovolin H synthase nvfL (243 aa).

The next 7 membrane-spanning stretches (helical) occupy residues 20 to 42 (ANTL…AYYS), 51 to 71 (ALIP…IHCP), 75 to 95 (FVRI…YAAI), 112 to 132 (LPFI…ALAA), 138 to 160 (IAFV…SQLL), 169 to 189 (SYVV…MVTI), and 205 to 225 (LLLW…FCFY).

The protein belongs to the paxB family.

Its subcellular location is the membrane. It carries out the reaction (3R)-[(10S)-11-epoxyfarnesyl]-2,3,5-trimethyl-6-oxido-4-oxocyclohexa-1,5-diene-1-carboxylate + H(+) = asnovolin H. It participates in secondary metabolite biosynthesis; terpenoid biosynthesis. Functionally, terpene cyclase; part of the gene cluster that mediates the biosynthesis of novofumigatonin, a heavily oxygenated meroterpenoid containing a unique orthoester moiety. The first step of the pathway is the synthesis of 3,5-dimethylorsellinic acid (DMOA) by the polyketide synthase nvfA via condensation of one acetyl-CoA starter unit with 3 malonyl-CoA units and 2 methylations. DMOA is then converted to farnesyl-DMOA by the farnesyltransferase nvfB. Epoxydation by FAD-dependent monooxygenase nvfK, followed by a protonation-initiated cyclization catalyzed by the terpene cyclase nvfL leads to the production of asnavolin H. The short chain dehydrogenase nvfC then as a 3-OH dehydrogenase of asnovolin H to yield chemesin D. There are two branches to synthesize asnovolin A from chemesin D. In one branch, chemesin D undergoes Baeyer-Villiger oxidation by nvfH, methylation by nvfJ, and enoyl reduction by the nvfM D enoylreductase that reduces the double bond between C-5'and C-6', to form respectively asnovolin I, asnovolin K, and asnovolin A. In the other branch, the methylation precedes the Baeyer-Villiger oxidation and the enoyl reduction to yield asnovolin A via the asnovolin J intermediate. Asnovolin A is further converted to fumigatonoid A by the Fe(II)/2-oxoglutarate-dependent dioxygenase nvfI that catalyzes an endoperoxidation reaction. The alpha/beta hydrolase nvfD then acts as an epimerase that converts fumigatonoid A to its C-5' epimer, which then undergoes spontaneous or nvfD-catalyzed lactonization. The following step utilizes the ketoreductase nvfG to produce fumigatonoid B. The dioxygenase nvfE further converts fumigatonoid B into fumigatonoid C. Finally the Fe(II)/2-oxoglutarate-dependent dioxygenase nvfF catalyzes two rounds of oxidation to transform fumigatonoid C into the end product, novofumigatonin A. The chain is Asnovolin H synthase nvfL from Aspergillus novofumigatus (strain IBT 16806).